Here is a 448-residue protein sequence, read N- to C-terminus: MYMELYLMFSNFFKSIRWCKVPAFMQAKVEMGLVNEVELKSLLEQETDSPQTNAASLMEQGSLRERRAKAPRNSVVQSFKIVILSNKLNLLLPFGPLAILVHYLTDNKGWFFLLSLVGITPLAERLGYATEQLSCYTGATVGGLLNATFGNVIELIISIIALKNGMIRVVQLTLLGSILSNILLVLGCAFFCGGLVFPGKDQVFDKRNAVVSSGMLLMAVMGLLFPTFLHYTHSEVHAGSSELALSRFISCIMLVAYAAYLFFQLKSQPSFYTEKTNQNEETSNDDEDPEISKWEAIIWLSIFTAWVSLLSGYLVDAIEGTSVSWKIPISFISVILLPIVGNAAEHAGAIMFAMKDKLDLSLGVAIGSSIQISMFAVPFCVVIGWMMGAQMDLNLQLFETATLLITVIVVAFFLQLEGTSNYFKRLMLILCYLIVAASFFVHEDPHQG.

Topologically, residues 31-81 (MGLVNEVELKSLLEQETDSPQTNAASLMEQGSLRERRAKAPRNSVVQSFKI) are cytoplasmic. The helical transmembrane segment at 82 to 102 (VILSNKLNLLLPFGPLAILVH) threads the bilayer. The Extracellular portion of the chain corresponds to 103-109 (YLTDNKG). Residues 110-130 (WFFLLSLVGITPLAERLGYAT) form a helical membrane-spanning segment. Residues 131–141 (EQLSCYTGATV) lie on the Cytoplasmic side of the membrane. Residues 142-162 (GGLLNATFGNVIELIISIIAL) traverse the membrane as a helical segment. Residues 150–185 (GNVIELIISIIALKNGMIRVVQLTLLGSILSNILLV) form a cation selection region. Residues 163 to 178 (KNGMIRVVQLTLLGSI) lie on the Extracellular side of the membrane. Residues 179–199 (LSNILLVLGCAFFCGGLVFPG) form a helical membrane-spanning segment. Over 200 to 209 (KDQVFDKRNA) the chain is Cytoplasmic. The helical transmembrane segment at 210-230 (VVSSGMLLMAVMGLLFPTFLH) threads the bilayer. The Extracellular segment spans residues 231–243 (YTHSEVHAGSSEL). A helical transmembrane segment spans residues 244–264 (ALSRFISCIMLVAYAAYLFFQ). Over 265-295 (LKSQPSFYTEKTNQNEETSNDDEDPEISKWE) the chain is Cytoplasmic. Residues 296-316 (AIIWLSIFTAWVSLLSGYLVD) form a helical membrane-spanning segment. At 317–334 (AIEGTSVSWKIPISFISV) the chain is on the extracellular side. Residues 335–355 (ILLPIVGNAAEHAGAIMFAMK) traverse the membrane as a helical segment. The tract at residues 341–376 (GNAAEHAGAIMFAMKDKLDLSLGVAIGSSIQISMFA) is cation selection. The Cytoplasmic segment spans residues 356–363 (DKLDLSLG). Residues 364–384 (VAIGSSIQISMFAVPFCVVIG) form a helical membrane-spanning segment. The Extracellular portion of the chain corresponds to 385–393 (WMMGAQMDL). Residues 394–414 (NLQLFETATLLITVIVVAFFL) traverse the membrane as a helical segment. Residues 415–425 (QLEGTSNYFKR) are Cytoplasmic-facing. Residues 426–446 (LMLILCYLIVAASFFVHEDPH) form a helical membrane-spanning segment. Topologically, residues 447–448 (QG) are extracellular.

This sequence belongs to the Ca(2+):cation antiporter (CaCA) (TC 2.A.19) family. Cation/proton exchanger (CAX) subfamily.

Its subcellular location is the vacuole membrane. Functionally, vacuolar cation/proton exchanger (CAX). Translocates Ca(2+) and other metal ions into vacuoles using the proton gradient formed by H(+)-ATPase and H(+)-pyrophosphatase. This Arabidopsis thaliana (Mouse-ear cress) protein is Putative vacuolar cation/proton exchanger 6 (CAX6).